We begin with the raw amino-acid sequence, 121 residues long: Large ribosomal subunit protein uL18 (121 aa).

Belongs to the universal ribosomal protein uL18 family. In terms of assembly, part of the 50S ribosomal subunit; part of the 5S rRNA/L5/L18/L25 subcomplex. Contacts the 5S and 23S rRNAs.

In terms of biological role, this is one of the proteins that bind and probably mediate the attachment of the 5S RNA into the large ribosomal subunit, where it forms part of the central protuberance. This Bordetella avium (strain 197N) protein is Large ribosomal subunit protein uL18.